We begin with the raw amino-acid sequence, 347 residues long: MARDGEIERIMETVIKPTKNGITTNLILYGDSGTGKTVTMRYLAREIRDPQVVYVNAIAYRYVKNVLIDFLSKFGIIVPERSSYASLFTRIEGLLRNQGKNVILVIDEAANILKGDYDGLYYLFRSKDSFDVNISTIFVVMEDPAILFDAKIRKSYGIFSEIKFRRYTKGEIYQIVMNRAVQSLTGEGYDEDVLDYIAEVSAEYGSARVGIDILAKAAHIAEYRRSPKISFDDVRAARSMISPFVTESKLASMDYEDLMVLLSICRCLSASRFTDVDCISRNLSVISEQYGKKDINLYDRIKRLENNGIISSSIEGQGRGEGVKKVISIYDIPVSVLTEKIENLLSA.

ATP contacts are provided by residues 34–38, tyrosine 167, and arginine 179; that span reads TGKTV.

It belongs to the CDC6/cdc18 family.

Functionally, involved in regulation of DNA replication. Has no effect on MCM helicase activity, either stimulatory or inhibitory. Does not bind DNA. This is Putative ORC1-type DNA replication protein 1 (cdc6-1) from Thermoplasma acidophilum (strain ATCC 25905 / DSM 1728 / JCM 9062 / NBRC 15155 / AMRC-C165).